Consider the following 119-residue polypeptide: V-type proton ATPase subunit F (119 aa).

Belongs to the V-ATPase F subunit family. In terms of assembly, V-ATPase is a heteromultimeric enzyme made up of two complexes: the ATP-hydrolytic V1 complex and the proton translocation V0 complex. The V1 complex consists of three catalytic AB heterodimers that form a heterohexamer, three peripheral stalks each consisting of EG heterodimers, one central rotor including subunits D and F, and the regulatory subunits C and H. The proton translocation complex V0 consists of the proton transport subunit a, a ring of proteolipid subunits c9c'', rotary subunit d, subunits e and f, and the accessory subunits ATP6AP1/Ac45 and ATP6AP2/PRR.

Its subcellular location is the cytoplasmic vesicle. The protein resides in the secretory vesicle. It is found in the synaptic vesicle membrane. The protein localises to the clathrin-coated vesicle membrane. In terms of biological role, subunit of the V1 complex of vacuolar(H+)-ATPase (V-ATPase), a multisubunit enzyme composed of a peripheral complex (V1) that hydrolyzes ATP and a membrane integral complex (V0) that translocates protons. V-ATPase is responsible for acidifying and maintaining the pH of intracellular compartments and in some cell types, is targeted to the plasma membrane, where it is responsible for acidifying the extracellular environment. The sequence is that of V-type proton ATPase subunit F (Atp6v1f) from Mus musculus (Mouse).